We begin with the raw amino-acid sequence, 173 residues long: MARKEIIDEITMKRAITRITYEIIERNKELDKLVLIGIKTRGVYLAKRIQERLQQLEGLEIPFGELDTRPFRDDKQAQEDTTEIDIDITGKDVILVDDVLYTGRTIRAAIDGIVKLGRPARVQLAVLVDRGHRELPIRADYVGKNIPTGHDEEIIVQMSEHDGNDSILIKRED.

Substrate-binding positions include 40–41, 97–105, and arginine 130; these read TR and DDVLYTGRT. Positions 93 to 105 match the PRPP-binding motif; the sequence is VILVDDVLYTGRT.

Belongs to the purine/pyrimidine phosphoribosyltransferase family. PyrR subfamily.

Regulates transcriptional attenuation of the pyrimidine nucleotide (pyr) operon in response to exogenous pyrimidines, probably by binding to specific sites on pyr mRNA. This probably disrupts an antiterminator hairpin in the RNA and favors formation of a downstream transcription terminator, leading to a reduced expression of downstream genes. The chain is Pyrimidine operon regulatory protein (pyrR) from Lactococcus lactis subsp. cremoris (strain MG1363).